Consider the following 332-residue polypeptide: Divalent cation transporter CmaX (332 aa).

The Cytoplasmic portion of the chain corresponds to 1-277 (MQAYESGDER…MNRTMYLLGI (277 aa)). A helical transmembrane segment spans residues 278 to 286 (ITGFFLPMS). The Periplasmic segment spans residues 287–307 (FVTGLLGINVGGIPGADAPHG). A helical transmembrane segment spans residues 308–323 (FWLACLLIGGVATFQW). Residues 324-332 (WVFRRLRWL) lie on the Cytoplasmic side of the membrane.

It belongs to the CorA metal ion transporter (MIT) (TC 1.A.35) family. As to quaternary structure, homopentamer.

It is found in the cell inner membrane. The enzyme catalyses Zn(2+)(in) = Zn(2+)(out). The catalysed reaction is Cd(2+)(in) = Cd(2+)(out). It catalyses the reaction Ni(2+)(in) = Ni(2+)(out). It carries out the reaction Co(2+)(in) = Co(2+)(out). Transports divalent cations including Zn(2+), Cd(2+), Ni(2+) and Co(2+). The proton gradient has a small influence on transport suggesting that the transport is probably not proton-dependent. This Pseudomonas aeruginosa (strain ATCC 15692 / DSM 22644 / CIP 104116 / JCM 14847 / LMG 12228 / 1C / PRS 101 / PAO1) protein is Divalent cation transporter CmaX.